Reading from the N-terminus, the 379-residue chain is Cytochrome b (379 aa).

4 consecutive transmembrane segments (helical) span residues 33 to 53 (FGSL…FLAM), 77 to 98 (WLIR…FIHV), 113 to 133 (WNIG…GYVL), and 178 to 198 (FFAF…VHLL). Heme b contacts are provided by H83 and H97. Residues H182 and H196 each coordinate heme b. Residue H201 participates in a ubiquinone binding. The next 4 helical transmembrane spans lie at 226-246 (TKDL…ALFF), 288-308 (LGGV…PLLN), 320-340 (VTQV…WIGG), and 347-367 (FTTI…ILIP).

It belongs to the cytochrome b family. As to quaternary structure, the cytochrome bc1 complex contains 11 subunits: 3 respiratory subunits (MT-CYB, CYC1 and UQCRFS1), 2 core proteins (UQCRC1 and UQCRC2) and 6 low-molecular weight proteins (UQCRH/QCR6, UQCRB/QCR7, UQCRQ/QCR8, UQCR10/QCR9, UQCR11/QCR10 and a cleavage product of UQCRFS1). This cytochrome bc1 complex then forms a dimer. Heme b is required as a cofactor.

The protein resides in the mitochondrion inner membrane. Component of the ubiquinol-cytochrome c reductase complex (complex III or cytochrome b-c1 complex) that is part of the mitochondrial respiratory chain. The b-c1 complex mediates electron transfer from ubiquinol to cytochrome c. Contributes to the generation of a proton gradient across the mitochondrial membrane that is then used for ATP synthesis. This Akodon mystax (Caparao grass mouse) protein is Cytochrome b (MT-CYB).